Consider the following 427-residue polypeptide: UBX domain-containing protein 2 (427 aa).

2 disordered regions span residues 115 to 143 and 273 to 331; these read FDQS…SRAS and ETSG…GVAD. Residues 311–326 are compositionally biased toward low complexity; it reads STTESQGESSSQQAES. Positions 349-425 constitute a UBX domain; sequence PGPNVTRIQI…GIQNTALQFE (77 aa). Ser-371 carries the phosphoserine modification.

In terms of assembly, interacts with cdc48.

Involved in CDC48-dependent protein degradation through the ubiquitin/proteasome pathway. This is UBX domain-containing protein 2 (ubx2) from Schizosaccharomyces pombe (strain 972 / ATCC 24843) (Fission yeast).